Consider the following 204-residue polypeptide: MCKDRQHTSRPQIQHNRVKTPLAKLTSTIAKGPLHRRSTMGRHRAAYHRCYRRSSKESSAIIPCKTRTYSTVSETAWRQTNPSPNELLLSMLPPVPRRPRGGCRPLHAPLLNKMPQTFPAASERPMPSRRLSKATQNVQTRPSERPAPCHRRPGPRGPGGRDPPEACHPWSLGPELGLLAPSEVQFDCLEASRTWNTFIGAYTK.

The segment at 118–169 (FPAASERPMPSRRLSKATQNVQTRPSERPAPCHRRPGPRGPGGRDPPEACHP) is disordered.

This is an uncharacterized protein from Encephalitozoon cuniculi (strain GB-M1) (Microsporidian parasite).